Reading from the N-terminus, the 115-residue chain is Transmembrane protein 218 (115 aa).

3 helical membrane-spanning segments follow: residues 5–25, 38–58, and 81–101; these read VLGV…VLLL, FSVI…LLFP, and YVLL…VLIH.

Belongs to the TMEM218 family. Interacts with TMEM67.

Its subcellular location is the membrane. The protein localises to the cell projection. The protein resides in the cilium. In terms of biological role, may be involved in ciliary biogenesis or function. This is Transmembrane protein 218 (TMEM218) from Homo sapiens (Human).